A 101-amino-acid chain; its full sequence is Small ribosomal subunit protein uS14 (101 aa).

It belongs to the universal ribosomal protein uS14 family. As to quaternary structure, part of the 30S ribosomal subunit. Contacts proteins S3 and S10.

Binds 16S rRNA, required for the assembly of 30S particles and may also be responsible for determining the conformation of the 16S rRNA at the A site. This chain is Small ribosomal subunit protein uS14, found in Buchnera aphidicola subsp. Schizaphis graminum (strain Sg).